The primary structure comprises 286 residues: MANIKVAVVQLSFNDNEAENLAKLESKIIQAAKNGAKIILTPELPSYLYFCKKQNSKYFDLAKTIDESPIVKLYKLLAHKYNIVLPASFFERDGNACYNSIAMIDADGSIMGVYRKAHIPDGIGYQEKYYFSPGSAGFKVWDTKYAKVGVGICWDQWFPEAARVMALKGAEILLYPTAIGSEPHLPDYDSKDHWQRVMQGHAAANMLPVLASNRYATEANDDITATYYGSSFITDHTGDKIAEADRSGDDILYATFDFAELQQQRFYWGLFRDRRPELYDEIVRKY.

Residues 4–258 (IKVAVVQLSF…DDILYATFDF (255 aa)) form the CN hydrolase domain. E43 acts as the Proton acceptor in catalysis. The active site involves K116. The active-site Nucleophile is C153.

Belongs to the carbon-nitrogen hydrolase superfamily.

The enzyme catalyses L-citrulline + H2O + 2 H(+) = L-ornithine + NH4(+) + CO2. Its function is as follows. Catalyzes the degradation of citrulline into ornithine, carbon dioxide and ammonia. Contributes to intramacrophage survival, in vivo growth and pathogenesis. This chain is Citrullinase, found in Francisella tularensis subsp. tularensis (strain SCHU S4 / Schu 4).